The sequence spans 496 residues: MAKLGTMPPQHAAKPVDEHAARLIPEDSVPIQTQKPFTTLSAIGIGYGVTNTAVGIPLILSTAMPMGGSPQVFWGFLAMAAVGLATATTLAELVSAMPHPGGQYIWVNALAPKRYRRGLSYTTAMISWVAAVATGSSGNLSVPLNAFSIVTLLQPDFVYRRWMGFAAFQAINVVTCFGACFEHALPKLSKAFLLFNVVSVGVIIVALFAMADARTSAKDFFTTVNTSGWPDGVAFIIGLNGANWCFSCLDVATHLAEEIPSPGTNIPKALLWTIFIASTSGLLVVLAVLVNLGPVDVSDYSGIGIFYRITGSKAAAIGLWIPVLILVLASVWSIQTWQSRLAWTISRESGFPLHRHFSKIFPAPFYTPIWSLVGSAVGTALFGCLYLASELAFNSLIATGILLQYISYSIPTVLVLWQGRRNFRHGQFWYPRLGLVANFIMLAWTVVAFVFYCFPANAQVRPSQMNYVSGVLVVIATFIAALWILYARKNYRVMEI.

5 helical membrane-spanning segments follow: residues 40–60 (LSAI…PLIL), 72–92 (VFWG…TLAE), 124–144 (AMIS…SVPL), 162–182 (WMGF…ACFE), and 191–211 (AFLL…FAMA). Asn225 carries N-linked (GlcNAc...) asparagine glycosylation. A run of 6 helical transmembrane segments spans residues 270–290 (LLWT…AVLV), 314–334 (AAAI…VWSI), 368–388 (PIWS…LYLA), 396–416 (LIAT…VLVL), 434–454 (GLVA…FYCF), and 467–487 (YVSG…ILYA).

This sequence belongs to the amino acid-polyamine-organocation (APC) superfamily. Amino acid/choline transporter (ACT) (TC 2.A.3.4) family.

The protein resides in the membrane. Functionally, transmembrane transporter; part of the gene cluster that mediates the biosynthesis of swainsonine, a cytotoxic fungal alkaloid and a potential cancer therapy drug. Does not mediate the secretion of SW and the exact role of swnT in SW biosynthesis remains to be determined. The chain is Transmembrane transporter swnT from Metarhizium robertsii (strain ARSEF 23 / ATCC MYA-3075) (Metarhizium anisopliae (strain ARSEF 23)).